The chain runs to 210 residues: Peptidyl-tRNA hydrolase (210 aa).

Tyrosine 14 contributes to the tRNA binding site. Histidine 19 functions as the Proton acceptor in the catalytic mechanism. 3 residues coordinate tRNA: phenylalanine 64, asparagine 66, and asparagine 112.

Belongs to the PTH family. Monomer.

The protein resides in the cytoplasm. It catalyses the reaction an N-acyl-L-alpha-aminoacyl-tRNA + H2O = an N-acyl-L-amino acid + a tRNA + H(+). Hydrolyzes ribosome-free peptidyl-tRNAs (with 1 or more amino acids incorporated), which drop off the ribosome during protein synthesis, or as a result of ribosome stalling. In terms of biological role, catalyzes the release of premature peptidyl moieties from peptidyl-tRNA molecules trapped in stalled 50S ribosomal subunits, and thus maintains levels of free tRNAs and 50S ribosomes. This chain is Peptidyl-tRNA hydrolase, found in Methylorubrum extorquens (strain CM4 / NCIMB 13688) (Methylobacterium extorquens).